Here is a 507-residue protein sequence, read N- to C-terminus: ATP synthase subunit alpha, mitochondrial (507 aa).

171 to 178 provides a ligand contact to ATP; sequence GDRQTGKT.

It belongs to the ATPase alpha/beta chains family. In terms of assembly, F-type ATPases have 2 components, CF(1) - the catalytic core - and CF(0) - the membrane proton channel. CF(1) has five subunits: alpha(3), beta(3), gamma(1), delta(1), epsilon(1). CF(0) has three main subunits: a, b and c.

It localises to the mitochondrion. The protein localises to the mitochondrion inner membrane. Mitochondrial membrane ATP synthase (F(1)F(0) ATP synthase or Complex V) produces ATP from ADP in the presence of a proton gradient across the membrane which is generated by electron transport complexes of the respiratory chain. F-type ATPases consist of two structural domains, F(1) - containing the extramembraneous catalytic core, and F(0) - containing the membrane proton channel, linked together by a central stalk and a peripheral stalk. During catalysis, ATP synthesis in the catalytic domain of F(1) is coupled via a rotary mechanism of the central stalk subunits to proton translocation. Subunits alpha and beta form the catalytic core in F(1). Rotation of the central stalk against the surrounding alpha(3)beta(3) subunits leads to hydrolysis of ATP in three separate catalytic sites on the beta subunits. Subunit alpha does not bear the catalytic high-affinity ATP-binding sites. This chain is ATP synthase subunit alpha, mitochondrial (ATPA), found in Brassica napus (Rape).